We begin with the raw amino-acid sequence, 30 residues long: Beta-endorphin-2 (30 aa).

At tyrosine 1 the chain carries N-acetyltyrosine.

Belongs to the POMC family.

Its subcellular location is the secreted. The protein is Beta-endorphin-2 of Oncorhynchus keta (Chum salmon).